Reading from the N-terminus, the 32-residue chain is Trypsin inhibitor 3 (32 aa).

Disulfide bonds link Cys-6/Cys-23, Cys-13/Cys-25, and Cys-19/Cys-31.

The protein belongs to the protease inhibitor I7 (squash-type serine protease inhibitor) family.

Its subcellular location is the secreted. In terms of biological role, inhibits trypsin. This is Trypsin inhibitor 3 from Cucurbita pepo (Vegetable marrow).